The following is a 429-amino-acid chain: Ribosomal RNA small subunit methyltransferase B (429 aa).

Residues cysteine 254–lysine 260, aspartate 277, aspartate 303, and aspartate 322 contribute to the S-adenosyl-L-methionine site. Cysteine 375 (nucleophile) is an active-site residue.

The protein belongs to the class I-like SAM-binding methyltransferase superfamily. RsmB/NOP family.

The protein localises to the cytoplasm. It carries out the reaction cytidine(967) in 16S rRNA + S-adenosyl-L-methionine = 5-methylcytidine(967) in 16S rRNA + S-adenosyl-L-homocysteine + H(+). Specifically methylates the cytosine at position 967 (m5C967) of 16S rRNA. The chain is Ribosomal RNA small subunit methyltransferase B from Escherichia coli O6:H1 (strain CFT073 / ATCC 700928 / UPEC).